Consider the following 277-residue polypeptide: NADPH-dependent 7-cyano-7-deazaguanine reductase (277 aa).

Substrate is bound at residue 83–85 (VES). 85 to 86 (SK) lines the NADPH pocket. The active-site Thioimide intermediate is C184. D191 serves as the catalytic Proton donor. 223–224 (HE) lines the substrate pocket. Residue 252-253 (RG) participates in NADPH binding.

This sequence belongs to the GTP cyclohydrolase I family. QueF type 2 subfamily. In terms of assembly, homodimer.

It localises to the cytoplasm. The catalysed reaction is 7-aminomethyl-7-carbaguanine + 2 NADP(+) = 7-cyano-7-deazaguanine + 2 NADPH + 3 H(+). Its pathway is tRNA modification; tRNA-queuosine biosynthesis. Functionally, catalyzes the NADPH-dependent reduction of 7-cyano-7-deazaguanine (preQ0) to 7-aminomethyl-7-deazaguanine (preQ1). The sequence is that of NADPH-dependent 7-cyano-7-deazaguanine reductase from Cupriavidus taiwanensis (strain DSM 17343 / BCRC 17206 / CCUG 44338 / CIP 107171 / LMG 19424 / R1) (Ralstonia taiwanensis (strain LMG 19424)).